The chain runs to 378 residues: WUSCHEL-related homeobox 9 (378 aa).

Disordered regions lie at residues 1–60 (MASS…NPKP) and 123–173 (KHSL…GSQM). Over residues 32 to 42 (SASHRSSPFSS) the composition is skewed to low complexity. Positions 45–54 (EVERSPEPKP) are enriched in basic and acidic residues. The segment at residues 51 to 115 (EPKPRWNPKP…NRKSRSKHKL (65 aa)) is a DNA-binding region (homeobox; WUS-type). Composition is skewed to low complexity over residues 137 to 152 (PSAS…SSKS) and 161 to 171 (KNNTNLSLGGS).

The protein belongs to the WUS homeobox family. Expressed in the basal cell and later at the boundary between suspensor and proembryo. Expressed at low levels in proliferating tissues post embryonically. Detected in vegetative shoot apical meristem, leaf primordia, floral meristems, emerging floral organs, epidermal layer of the placenta and in the upper portion of the root meristematic zone.

It is found in the nucleus. The protein localises to the cytoplasm. Its function is as follows. Homeodomain transcription factor required for meristem growth and early development. Promotes cell proliferation and prevents premature differentiation in meristematic tissues during postembryonic development. Essential for maintaining tissue growth during embryogenesis. May act by repressing TSS to promote meristematic proliferation. Involved in the transcriptional activation of a subset of cytokinin response factors. May act as a negative regulator of cytokinin signaling in the dark. The polypeptide is WUSCHEL-related homeobox 9 (Arabidopsis thaliana (Mouse-ear cress)).